Consider the following 255-residue polypeptide: Large ribosomal subunit protein uL4 (255 aa).

This sequence belongs to the universal ribosomal protein uL4 family. In terms of assembly, part of the 50S ribosomal subunit.

One of the primary rRNA binding proteins, this protein initially binds near the 5'-end of the 23S rRNA. It is important during the early stages of 50S assembly. It makes multiple contacts with different domains of the 23S rRNA in the assembled 50S subunit and ribosome. Its function is as follows. Forms part of the polypeptide exit tunnel. This Pyrococcus horikoshii (strain ATCC 700860 / DSM 12428 / JCM 9974 / NBRC 100139 / OT-3) protein is Large ribosomal subunit protein uL4.